Here is a 161-residue protein sequence, read N- to C-terminus: Protein-export protein SecB (161 aa).

This sequence belongs to the SecB family. Homotetramer, a dimer of dimers. One homotetramer interacts with 1 SecA dimer.

Its subcellular location is the cytoplasm. Its function is as follows. One of the proteins required for the normal export of preproteins out of the cell cytoplasm. It is a molecular chaperone that binds to a subset of precursor proteins, maintaining them in a translocation-competent state. It also specifically binds to its receptor SecA. This chain is Protein-export protein SecB, found in Shewanella baltica (strain OS155 / ATCC BAA-1091).